The sequence spans 256 residues: 5-oxoprolinase subunit A 2 (256 aa).

This sequence belongs to the LamB/PxpA family. In terms of assembly, forms a complex composed of PxpA, PxpB and PxpC.

The enzyme catalyses 5-oxo-L-proline + ATP + 2 H2O = L-glutamate + ADP + phosphate + H(+). Catalyzes the cleavage of 5-oxoproline to form L-glutamate coupled to the hydrolysis of ATP to ADP and inorganic phosphate. This is 5-oxoprolinase subunit A 2 from Bradyrhizobium diazoefficiens (strain JCM 10833 / BCRC 13528 / IAM 13628 / NBRC 14792 / USDA 110).